Reading from the N-terminus, the 247-residue chain is Uridylate kinase (247 aa).

14 to 17 lines the ATP pocket; the sequence is KLSG. The interval 22–27 is involved in allosteric activation by GTP; that stretch reads GERGVG. UMP is bound at residue glycine 56. Residues glycine 57 and arginine 61 each coordinate ATP. UMP-binding positions include aspartate 76 and 137–144; that span reads IGSPYFST. Asparagine 165, tyrosine 171, and aspartate 174 together coordinate ATP.

This sequence belongs to the UMP kinase family. In terms of assembly, homohexamer.

It localises to the cytoplasm. It catalyses the reaction UMP + ATP = UDP + ADP. The protein operates within pyrimidine metabolism; CTP biosynthesis via de novo pathway; UDP from UMP (UMPK route): step 1/1. With respect to regulation, allosterically activated by GTP. Inhibited by UTP. Functionally, catalyzes the reversible phosphorylation of UMP to UDP. The sequence is that of Uridylate kinase from Streptococcus pneumoniae (strain ATCC BAA-255 / R6).